Here is a 447-residue protein sequence, read N- to C-terminus: UDP-N-acetylmuramoyl-L-alanyl-D-glutamate--2,6-diaminopimelate ligase (447 aa).

Threonine 21 contributes to the UDP-N-acetyl-alpha-D-muramoyl-L-alanyl-D-glutamate binding site. 74 to 80 (GTNGKTT) is a binding site for ATP. Residues 117 to 118 (TT), serine 144, glutamine 150, and arginine 152 each bind UDP-N-acetyl-alpha-D-muramoyl-L-alanyl-D-glutamate. An N6-carboxylysine modification is found at lysine 184. Residues arginine 340, 364–367 (DNPR), glycine 415, and glutamate 419 contribute to the meso-2,6-diaminopimelate site. The short motif at 364–367 (DNPR) is the Meso-diaminopimelate recognition motif element.

The protein belongs to the MurCDEF family. MurE subfamily. The cofactor is Mg(2+). Post-translationally, carboxylation is probably crucial for Mg(2+) binding and, consequently, for the gamma-phosphate positioning of ATP.

The protein resides in the cytoplasm. The enzyme catalyses UDP-N-acetyl-alpha-D-muramoyl-L-alanyl-D-glutamate + meso-2,6-diaminopimelate + ATP = UDP-N-acetyl-alpha-D-muramoyl-L-alanyl-gamma-D-glutamyl-meso-2,6-diaminopimelate + ADP + phosphate + H(+). It functions in the pathway cell wall biogenesis; peptidoglycan biosynthesis. Catalyzes the addition of meso-diaminopimelic acid to the nucleotide precursor UDP-N-acetylmuramoyl-L-alanyl-D-glutamate (UMAG) in the biosynthesis of bacterial cell-wall peptidoglycan. The sequence is that of UDP-N-acetylmuramoyl-L-alanyl-D-glutamate--2,6-diaminopimelate ligase from Helicobacter pylori (strain J99 / ATCC 700824) (Campylobacter pylori J99).